The chain runs to 130 residues: Encapsulin nanocompartment cargo protein EncC (130 aa).

Residues Glu-31, Glu-61, and His-64 each coordinate Fe cation. A Di-iron-binding motif motif is present at residues 61-64 (EREH). A disordered region spans residues 103–130 (EAVGKEGAAPSPADVTPEKRLTVGSLRR). The interval 123–130 (LTVGSLRR) is probable targeting peptide.

This sequence belongs to the ferritin-like superfamily.

It localises to the encapsulin nanocompartment. Its function is as follows. Cargo protein of a type 1 encapsulin nanocompartment. May help nucleate Fe atoms in the interior of the encapsulin nanocompartment. Present in about 92 copies/encapsulin nanocompartment. The protein is Encapsulin nanocompartment cargo protein EncC of Myxococcus xanthus (strain DK1622).